Here is a 251-residue protein sequence, read N- to C-terminus: Insertion sequence IS5376 putative ATP-binding protein (251 aa).

ATP is bound at residue 105-112 (GPPGIGKT).

This sequence belongs to the IS21/IS1162 putative ATP-binding protein family.

The polypeptide is Insertion sequence IS5376 putative ATP-binding protein (Geobacillus stearothermophilus (Bacillus stearothermophilus)).